The sequence spans 253 residues: tRNA pseudouridine synthase A (253 aa).

The active-site Nucleophile is the aspartate 53. A substrate-binding site is contributed by tyrosine 112.

Belongs to the tRNA pseudouridine synthase TruA family. As to quaternary structure, homodimer.

It catalyses the reaction uridine(38/39/40) in tRNA = pseudouridine(38/39/40) in tRNA. Functionally, formation of pseudouridine at positions 38, 39 and 40 in the anticodon stem and loop of transfer RNAs. In Lactococcus lactis subsp. cremoris (strain MG1363), this protein is tRNA pseudouridine synthase A.